We begin with the raw amino-acid sequence, 370 residues long: tRNA N6-adenosine threonylcarbamoyltransferase (370 aa).

Positions 122 and 126 each coordinate Fe cation. Substrate-binding positions include 153-157 (LLSGG), Asp-186, Gly-199, and Asn-298. Asp-326 provides a ligand contact to Fe cation.

It belongs to the KAE1 / TsaD family. It depends on Fe(2+) as a cofactor.

It is found in the cytoplasm. It carries out the reaction L-threonylcarbamoyladenylate + adenosine(37) in tRNA = N(6)-L-threonylcarbamoyladenosine(37) in tRNA + AMP + H(+). Required for the formation of a threonylcarbamoyl group on adenosine at position 37 (t(6)A37) in tRNAs that read codons beginning with adenine. Is involved in the transfer of the threonylcarbamoyl moiety of threonylcarbamoyl-AMP (TC-AMP) to the N6 group of A37, together with TsaE and TsaB. TsaD likely plays a direct catalytic role in this reaction. The protein is tRNA N6-adenosine threonylcarbamoyltransferase of Granulibacter bethesdensis (strain ATCC BAA-1260 / CGDNIH1).